Here is a 424-residue protein sequence, read N- to C-terminus: Fasciclin-like arabinogalactan protein 1 (424 aa).

Positions 1 to 24 (MAKKMSSLIIIFNILLLLTTQTHA) are cleaved as a signal peptide. FAS1 domains follow at residues 25–170 (HNVT…SRVL) and 184–323 (EMNL…DKVL). 5 N-linked (GlcNAc...) asparagine glycosylation sites follow: Asn-26, Asn-128, Asn-160, Asn-186, and Asn-240. The segment at 338–393 (APAPAPEDGDVADSPKAAKGKAKGKKKKAAPSPDNDPFGDSDSPAEGPDGEADDAT) is disordered. Over residues 355–366 (AKGKAKGKKKKA) the composition is skewed to basic residues. Residue Asp-396 is the site of GPI-anchor amidated aspartate attachment. Positions 397-424 (AGAVRIIGGAKAGLVVSLLCLFASSWLL) are cleaved as a propeptide — removed in mature form.

The protein belongs to the fasciclin-like AGP family. In terms of tissue distribution, preferentially expressed in flowers.

It localises to the secreted. The protein localises to the extracellular space. Its subcellular location is the apoplast. It is found in the cell membrane. In terms of biological role, may be a cell surface adhesion protein. This chain is Fasciclin-like arabinogalactan protein 1 (FLA1), found in Arabidopsis thaliana (Mouse-ear cress).